A 269-amino-acid chain; its full sequence is Hemin import ATP-binding protein HmuV (269 aa).

The 241-residue stretch at 2–242 (LEVIHTGLNI…AMVEACFDLP (241 aa)) folds into the ABC transporter domain. 34–41 (GPNGAGKS) provides a ligand contact to ATP.

The protein belongs to the ABC transporter superfamily. Heme (hemin) importer (TC 3.A.1.14.5) family. The complex is composed of two ATP-binding proteins (HmuV), two transmembrane proteins (HmuU) and a solute-binding protein (HmuT).

The protein resides in the cell inner membrane. Its function is as follows. Part of the ABC transporter complex HmuTUV involved in hemin import. Responsible for energy coupling to the transport system. The polypeptide is Hemin import ATP-binding protein HmuV (Methylobacillus flagellatus (strain ATCC 51484 / DSM 6875 / VKM B-1610 / KT)).